Consider the following 230-residue polypeptide: Probable methylthioribulose-1-phosphate dehydratase (230 aa).

Cys87 serves as a coordination point for substrate. 2 residues coordinate Zn(2+): His105 and His107. Catalysis depends on Glu129, which acts as the Proton donor/acceptor. Residue His185 participates in Zn(2+) binding.

It belongs to the aldolase class II family. MtnB subfamily. It depends on Zn(2+) as a cofactor.

Its subcellular location is the cytoplasm. It catalyses the reaction 5-(methylsulfanyl)-D-ribulose 1-phosphate = 5-methylsulfanyl-2,3-dioxopentyl phosphate + H2O. It functions in the pathway amino-acid biosynthesis; L-methionine biosynthesis via salvage pathway; L-methionine from S-methyl-5-thio-alpha-D-ribose 1-phosphate: step 2/6. Its function is as follows. Catalyzes the dehydration of methylthioribulose-1-phosphate (MTRu-1-P) into 2,3-diketo-5-methylthiopentyl-1-phosphate (DK-MTP-1-P). The polypeptide is Probable methylthioribulose-1-phosphate dehydratase (Drosophila virilis (Fruit fly)).